A 160-amino-acid chain; its full sequence is Serine-protein kinase RsbW (160 aa).

The protein belongs to the anti-sigma-factor family.

It carries out the reaction L-seryl-[protein] + ATP = O-phospho-L-seryl-[protein] + ADP + H(+). It catalyses the reaction L-threonyl-[protein] + ATP = O-phospho-L-threonyl-[protein] + ADP + H(+). Functionally, negative regulator of sigma-B activity. Phosphorylates and inactivates its specific antagonist protein, RsbV. Upon phosphorylation of RsbV, RsbW is released and binds to sigma-B, thereby blocking its ability to form an RNA polymerase holoenzyme (E-sigma-B). In Bacillus velezensis (strain DSM 23117 / BGSC 10A6 / LMG 26770 / FZB42) (Bacillus amyloliquefaciens subsp. plantarum), this protein is Serine-protein kinase RsbW.